Here is a 258-residue protein sequence, read N- to C-terminus: Imidazole glycerol phosphate synthase subunit HisF (258 aa).

Catalysis depends on residues aspartate 11 and aspartate 130.

This sequence belongs to the HisA/HisF family. In terms of assembly, heterodimer of HisH and HisF.

It is found in the cytoplasm. The catalysed reaction is 5-[(5-phospho-1-deoxy-D-ribulos-1-ylimino)methylamino]-1-(5-phospho-beta-D-ribosyl)imidazole-4-carboxamide + L-glutamine = D-erythro-1-(imidazol-4-yl)glycerol 3-phosphate + 5-amino-1-(5-phospho-beta-D-ribosyl)imidazole-4-carboxamide + L-glutamate + H(+). Its pathway is amino-acid biosynthesis; L-histidine biosynthesis; L-histidine from 5-phospho-alpha-D-ribose 1-diphosphate: step 5/9. IGPS catalyzes the conversion of PRFAR and glutamine to IGP, AICAR and glutamate. The HisF subunit catalyzes the cyclization activity that produces IGP and AICAR from PRFAR using the ammonia provided by the HisH subunit. The polypeptide is Imidazole glycerol phosphate synthase subunit HisF (Methylobacterium nodulans (strain LMG 21967 / CNCM I-2342 / ORS 2060)).